Consider the following 337-residue polypeptide: Protein BIG GRAIN 1-like (337 aa).

Disordered regions lie at residues 1-32 (MRDMEMRWAAPAPAARGRGRARRRAPDQPSFS), 120-163 (SAAG…RPAS), and 179-235 (KRPS…PSRS). Residues 137 to 146 (HEQPDVEKTA) are compositionally biased toward basic and acidic residues. 2 stretches are compositionally biased toward low complexity: residues 150-163 (PGSASARACRRPAS) and 195-209 (PACSTAPPSSSSSYA).

It belongs to the BIG GRAIN 1 (BG1) plant protein family.

It localises to the cell membrane. Its function is as follows. Involved in auxin transport. Regulator of the auxin signaling pathway. The sequence is that of Protein BIG GRAIN 1-like from Oryza sativa subsp. japonica (Rice).